We begin with the raw amino-acid sequence, 422 residues long: L-2-hydroxyglutarate dehydrogenase (422 aa).

This sequence belongs to the L2HGDH family. Requires FAD as cofactor.

It localises to the cell inner membrane. The catalysed reaction is (S)-2-hydroxyglutarate + a quinone = a quinol + 2-oxoglutarate. Its pathway is amino-acid degradation. Functionally, catalyzes the dehydrogenation of L-2-hydroxyglutarate (L2HG) to alpha-ketoglutarate and couples to the respiratory chain by feeding electrons from the reaction into the membrane quinone pool. Functions in a L-lysine degradation pathway that proceeds via cadaverine, glutarate and L-2-hydroxyglutarate. Also displays some oxidase activity in vitro on L-2-hydroxyglutarate with O2 as the electron acceptor, but this activity is most likely not physiological. The chain is L-2-hydroxyglutarate dehydrogenase from Escherichia coli O17:K52:H18 (strain UMN026 / ExPEC).